Consider the following 297-residue polypeptide: 4-hydroxy-tetrahydrodipicolinate synthase (297 aa).

Pyruvate is bound at residue threonine 47. The Proton donor/acceptor role is filled by tyrosine 135. The active-site Schiff-base intermediate with substrate is the lysine 163. Isoleucine 205 lines the pyruvate pocket.

The protein belongs to the DapA family. Homotetramer; dimer of dimers.

It localises to the cytoplasm. The enzyme catalyses L-aspartate 4-semialdehyde + pyruvate = (2S,4S)-4-hydroxy-2,3,4,5-tetrahydrodipicolinate + H2O + H(+). It participates in amino-acid biosynthesis; L-lysine biosynthesis via DAP pathway; (S)-tetrahydrodipicolinate from L-aspartate: step 3/4. Functionally, catalyzes the condensation of (S)-aspartate-beta-semialdehyde [(S)-ASA] and pyruvate to 4-hydroxy-tetrahydrodipicolinate (HTPA). The sequence is that of 4-hydroxy-tetrahydrodipicolinate synthase from Dehalococcoides mccartyi (strain CBDB1).